Here is a 96-residue protein sequence, read N- to C-terminus: Small ribosomal subunit protein bS18 (96 aa).

Basic and acidic residues predominate over residues 1-22 (MYKDVDSHQRDSRSDGHQDGFK). A disordered region spans residues 1–25 (MYKDVDSHQRDSRSDGHQDGFKKNP).

This sequence belongs to the bacterial ribosomal protein bS18 family. Part of the 30S ribosomal subunit. Forms a tight heterodimer with protein bS6.

Binds as a heterodimer with protein bS6 to the central domain of the 16S rRNA, where it helps stabilize the platform of the 30S subunit. The polypeptide is Small ribosomal subunit protein bS18 (Borrelia hermsii (strain HS1 / DAH)).